A 461-amino-acid chain; its full sequence is D-phenylhydantoinase (461 aa).

Residues His-59, His-61, and Lys-151 each coordinate a divalent metal cation. Lys-151 is modified (N6-carboxylysine). Tyr-156 serves as a coordination point for substrate. A divalent metal cation-binding residues include His-182 and His-239. Residue Ser-286 participates in substrate binding. Asp-313 lines the a divalent metal cation pocket. Asn-335 is a binding site for substrate.

The protein belongs to the metallo-dependent hydrolases superfamily. Hydantoinase/dihydropyrimidinase family. Homotetramer. A divalent metal cation serves as cofactor. In terms of processing, carboxylation allows a single lysine to coordinate two divalent metal cations.

It carries out the reaction D-5-phenylhydantoin + H2O = N-carbamoyl-D-phenylglycine + H(+). Its function is as follows. Catalyzes the stereospecific hydrolysis of the cyclic amide bond of D-hydantoin derivatives with an aromatic side chains at the 5'-position. Has no activity on dihydropyrimidines. The physiological function is unknown. The chain is D-phenylhydantoinase from Escherichia coli O127:H6 (strain E2348/69 / EPEC).